The following is a 497-amino-acid chain: O-acetyltransferase PaAT-1 (497 aa).

Asn35 carries an N-linked (GlcNAc...) asparagine glycan. 9 consecutive transmembrane segments (helical) span residues 69–89 (GISA…GWHI), 107–127 (LLIS…YSLS), 157–177 (LFVP…LNWY), 241–261 (LWTL…LMAF), 278–298 (VLFQ…GMLI), 329–349 (AIGV…HLAF), 375–395 (PIAA…QVLF), 406–426 (ISFA…HALG), and 443–463 (VAIS…ADFV).

Belongs to the acyltransferase 3 family.

Its subcellular location is the membrane. It functions in the pathway mycotoxin biosynthesis. Functionally, O-acetyltransferase; part of the 2 gene clusters that mediate the biosynthesis of fusicoccins, diterpene glucosides that display phytohormone-like activity and function as potent activators of plasma membrane H(+)-ATPases in plants by modifying 14-3-3 proteins and cause the plant disease constriction canker. The first step in the pathway is performed by the fusicoccadiene synthase PaFS that possesses both prenyl transferase and terpene cyclase activity, converting isopentenyl diphosphate and dimethylallyl diphosphate into geranylgeranyl diphosphate (GGDP) and successively converting GGDP into fusicocca-2,10(14)-diene, a precursor for fusicoccin H. The second step is the oxidation at the C-8 position by the cytochrome P450 monooxygenase PaP450-2 to yield fusicocca-2,10(14)-diene-8-beta-ol. The cytochrome P450 monooxygenase PaP450-1 then catalyzes the hydroxylation at the C-16 position to produce fusicocca-2,10(14)-diene-8-beta,16-diol. The dioxygenase fc-dox then catalyzes the 16-oxydation of fusicocca-2,10(14)-diene-8-beta,16-diol to yield an aldehyde (8-beta-hydroxyfusicocca-1,10(14)-dien-16-al). The short-chain dehydrogenase/reductase fc-sdr catalyzes the reduction of the aldehyde to yield fusicocca-1,10(14)-diene-8-beta,16-diol. The next step is the hydroxylation at C-9 performed by the cytochrome P450 monooxygenase PaP450-3 that leads to fusicoccin H aglycon which is glycosylated to fusicoccin H by the O-glycosyltransferase PaGT. Hydroxylation at C-12 by the cytochrome P450 monooxygenase PaP450-4 leads then to the production of fusicoccin Q and is followed by methylation by the O-methyltransferase PaMT to yield fusicoccin P. Fusicoccin P is further converted to fusicoccin J via prenylation by the O-glucose prenyltransferase PaPT. Cytochrome P450 monooxygenase PaP450-5 then performs hydroxylation at C-19 to yield dideacetyl-fusicoccin A which is acetylated to 3'-O-deacetyl-fusicoccin A by the O-acetyltransferase PaAT-2. Finally, a another acetylation by the O-acetyltransferase PaAT-1 yields fusicoccin A. This is O-acetyltransferase PaAT-1 from Phomopsis amygdali (Fusicoccum amygdali).